A 570-amino-acid chain; its full sequence is 4-hydroxy-7-methoxy-3-oxo-3,4-dihydro-2H-1,4-benzoxazin-2-yl glucoside beta-D-glucosidase 1c, chloroplastic (570 aa).

Residues 1–50 (MALLAAATLNPTTHLSIRSRAGHNSENLWLRSAASSQKSKGRFCNLTVRA) constitute a chloroplast transit peptide. A beta-D-glucoside-binding positions include glutamine 92, histidine 194, and 239–240 (NE). Glutamate 240 serves as the catalytic Proton donor. Cysteine 259 and cysteine 265 are joined by a disulfide. A beta-D-glucoside-binding positions include tyrosine 383, glutamate 456, tryptophan 504, 511–512 (EW), and phenylalanine 520. Catalysis depends on glutamate 456, which acts as the Nucleophile.

Belongs to the glycosyl hydrolase 1 family. As to quaternary structure, homo- and heterohexamers. As to expression, expressed in young seedlings early after germination.

The protein localises to the plastid. The protein resides in the chloroplast. It carries out the reaction Hydrolysis of terminal, non-reducing beta-D-glucosyl residues with release of beta-D-glucose.. The enzyme catalyses DIMBOA beta-D-glucoside + H2O = DIMBOA + D-glucose. The catalysed reaction is DIBOA beta-D-glucoside + H2O = DIBOA + D-glucose. In terms of biological role, acts in defense of young plant parts against pests via the production of hydroxamic acids from hydroxamic acid glucosides. Enzymatic activity is highly correlated with plant growth. The preferred substrate is DIMBOA-beta-D-glucoside. In Triticum aestivum (Wheat), this protein is 4-hydroxy-7-methoxy-3-oxo-3,4-dihydro-2H-1,4-benzoxazin-2-yl glucoside beta-D-glucosidase 1c, chloroplastic (GLU1C).